The following is a 74-amino-acid chain: uncharacterized protein (74 aa).

Transmembrane regions (helical) follow at residues 3-23 (YSAL…CFSF) and 35-55 (ILFF…MLLT).

The protein localises to the cell membrane. This is an uncharacterized protein from Mycoplasma genitalium (strain ATCC 33530 / DSM 19775 / NCTC 10195 / G37) (Mycoplasmoides genitalium).